Here is a 202-residue protein sequence, read N- to C-terminus: Glycerol-3-phosphate acyltransferase (202 aa).

The next 5 membrane-spanning stretches (helical) occupy residues 3–23, 51–71, 74–94, 116–136, and 140–160; these read ILLA…VVVS, KAAI…VWLV, FGIG…LGHL, AVHP…AFFF, and SLAA…LFGT.

The protein belongs to the PlsY family. In terms of assembly, probably interacts with PlsX.

It is found in the cell inner membrane. It catalyses the reaction an acyl phosphate + sn-glycerol 3-phosphate = a 1-acyl-sn-glycero-3-phosphate + phosphate. It participates in lipid metabolism; phospholipid metabolism. In terms of biological role, catalyzes the transfer of an acyl group from acyl-phosphate (acyl-PO(4)) to glycerol-3-phosphate (G3P) to form lysophosphatidic acid (LPA). This enzyme utilizes acyl-phosphate as fatty acyl donor, but not acyl-CoA or acyl-ACP. This chain is Glycerol-3-phosphate acyltransferase, found in Burkholderia thailandensis (strain ATCC 700388 / DSM 13276 / CCUG 48851 / CIP 106301 / E264).